A 380-amino-acid polypeptide reads, in one-letter code: Histidinol-phosphate aminotransferase (380 aa).

At Lys232 the chain carries N6-(pyridoxal phosphate)lysine.

This sequence belongs to the class-II pyridoxal-phosphate-dependent aminotransferase family. Histidinol-phosphate aminotransferase subfamily. Homodimer. Requires pyridoxal 5'-phosphate as cofactor.

The catalysed reaction is L-histidinol phosphate + 2-oxoglutarate = 3-(imidazol-4-yl)-2-oxopropyl phosphate + L-glutamate. It functions in the pathway amino-acid biosynthesis; L-histidine biosynthesis; L-histidine from 5-phospho-alpha-D-ribose 1-diphosphate: step 7/9. This Mycobacterium bovis (strain BCG / Pasteur 1173P2) protein is Histidinol-phosphate aminotransferase.